The chain runs to 131 residues: Profilin-6 (131 aa).

A disulfide bridge connects residues C13 and C115. An Involved in PIP2 interaction motif is present at residues A81–T97. A Phosphothreonine modification is found at T111.

The protein belongs to the profilin family. Occurs in many kinds of cells as a complex with monomeric actin in a 1:1 ratio. Phosphorylated by MAP kinases.

It localises to the cytoplasm. The protein resides in the cytoskeleton. Binds to actin and affects the structure of the cytoskeleton. At high concentrations, profilin prevents the polymerization of actin, whereas it enhances it at low concentrations. The chain is Profilin-6 from Zea mays (Maize).